Here is a 448-residue protein sequence, read N- to C-terminus: Adenosylhomocysteinase (448 aa).

The substrate site is built by threonine 61, aspartate 136, and glutamate 161. Residue 162-164 (TTA) participates in NAD(+) binding. Substrate is bound by residues lysine 191 and aspartate 195. NAD(+) contacts are provided by residues asparagine 196, 225–230 (GYGDVG), glutamate 248, asparagine 283, 304–306 (IGH), and asparagine 360.

This sequence belongs to the adenosylhomocysteinase family. The cofactor is NAD(+).

The protein localises to the cytoplasm. The catalysed reaction is S-adenosyl-L-homocysteine + H2O = L-homocysteine + adenosine. The protein operates within amino-acid biosynthesis; L-homocysteine biosynthesis; L-homocysteine from S-adenosyl-L-homocysteine: step 1/1. May play a key role in the regulation of the intracellular concentration of adenosylhomocysteine. The protein is Adenosylhomocysteinase of Rhodopirellula baltica (strain DSM 10527 / NCIMB 13988 / SH1).